The following is a 295-amino-acid chain: Ribosomal RNA small subunit methyltransferase H (295 aa).

S-adenosyl-L-methionine-binding positions include Gly-35 to His-37, Glu-55, Phe-82, Asp-103, and Gln-110.

It belongs to the methyltransferase superfamily. RsmH family.

The protein resides in the cytoplasm. It carries out the reaction cytidine(1402) in 16S rRNA + S-adenosyl-L-methionine = N(4)-methylcytidine(1402) in 16S rRNA + S-adenosyl-L-homocysteine + H(+). Functionally, specifically methylates the N4 position of cytidine in position 1402 (C1402) of 16S rRNA. The polypeptide is Ribosomal RNA small subunit methyltransferase H (Desulfotalea psychrophila (strain LSv54 / DSM 12343)).